Consider the following 413-residue polypeptide: Cell division protein FtsA (413 aa).

This sequence belongs to the FtsA/MreB family. In terms of assembly, self-interacts. Interacts with FtsZ.

The protein resides in the cell inner membrane. In terms of biological role, cell division protein that is involved in the assembly of the Z ring. May serve as a membrane anchor for the Z ring. This Borreliella burgdorferi (strain ATCC 35210 / DSM 4680 / CIP 102532 / B31) (Borrelia burgdorferi) protein is Cell division protein FtsA.